Reading from the N-terminus, the 215-residue chain is UPF0502 protein YceH (215 aa).

N6-acetyllysine is present on lysine 80.

This sequence belongs to the UPF0502 family.

The sequence is that of UPF0502 protein YceH from Escherichia coli O45:K1 (strain S88 / ExPEC).